The sequence spans 283 residues: ATP synthase gamma chain (283 aa).

This sequence belongs to the ATPase gamma chain family. F-type ATPases have 2 components, CF(1) - the catalytic core - and CF(0) - the membrane proton channel. CF(1) has five subunits: alpha(3), beta(3), gamma(1), delta(1), epsilon(1). CF(0) has three main subunits: a, b and c.

The protein localises to the cell membrane. Functionally, produces ATP from ADP in the presence of a proton gradient across the membrane. The gamma chain is believed to be important in regulating ATPase activity and the flow of protons through the CF(0) complex. This is ATP synthase gamma chain from Clostridium botulinum (strain Eklund 17B / Type B).